Reading from the N-terminus, the 204-residue chain is Protein FAM167A (204 aa).

The disordered stretch occupies residues 58 to 80; sequence GLAVSDGSTELEKDAGLKPRATP. The stretch at 113 to 146 forms a coiled coil; the sequence is LRKELMEMRIQDQQLARQLMRLRGDINKLKVEQT.

Belongs to the FAM167 (SEC) family.

The protein is Protein FAM167A (fam167a) of Danio rerio (Zebrafish).